A 246-amino-acid polypeptide reads, in one-letter code: Mast cell protease 4 (246 aa).

The first 18 residues, 1–18, serve as a signal peptide directing secretion; that stretch reads MQALLFLMALLLPSGAGA. The propeptide at 19–20 is activation peptide; the sequence is EE. Residues 21-244 form the Peptidase S1 domain; it reads IIGGVESRPH…YVPWINRVIK (224 aa). Cys-50 and Cys-66 are disulfide-bonded. Residues His-65 and Asp-109 each act as charge relay system in the active site. Disulfide bonds link Cys-143-Cys-208 and Cys-174-Cys-187. Catalysis depends on Ser-202, which acts as the Charge relay system.

Belongs to the peptidase S1 family. Granzyme subfamily. In terms of assembly, monomer. Interacts with iripin-2, a serine protease inhibitor from Ixodes ricinus saliva. Submucosal mast cells. In femoral muscle, detected in myocytes but not in mast cells.

Its activity is regulated as follows. Completely inhibited by serine protease inhibitors such as chymostatin, diisopropylfluorophosphate and phenylmethylsulfonyl fluoride, but not by p-tosyl-L-phenylalanine chloromethyl ketone, p-tosyl-L-lysine chloromethyl ketone, pepstatin, E-64, EDTA or o-phenanthroline. Also inhibited by lima bean trypsin inhibitor, soy bean trypsin inhibitor and human plasma alpha1-antichymotrypsin. In terms of biological role, has chymotrypsin-like activity. Hydrolyzes the amide bonds of synthetic substrates having Tyr and Phe residues at the P1 position. Preferentially hydrolyzes the 'Tyr-4-|-Ile-5' bond of angiotensin I and the 'Phe-20-|-Ala-21' bond of amyloid beta-protein, and is less active towards the 'Phe-8-|-His-9' bond of angiotensin I and the 'Phe-4-|-Ala-5' and 'Tyr-10-|-Glu-11' bonds of amyloid beta-protein. Involved in thrombin regulation and fibronectin processing. The protein is Mast cell protease 4 (Mcpt4) of Mus musculus (Mouse).